The sequence spans 296 residues: Bifunctional protein FolD (296 aa).

Residues 170–172 and S195 each bind NADP(+); that span reads GRS.

The protein belongs to the tetrahydrofolate dehydrogenase/cyclohydrolase family. Homodimer.

The catalysed reaction is (6R)-5,10-methylene-5,6,7,8-tetrahydrofolate + NADP(+) = (6R)-5,10-methenyltetrahydrofolate + NADPH. The enzyme catalyses (6R)-5,10-methenyltetrahydrofolate + H2O = (6R)-10-formyltetrahydrofolate + H(+). It participates in one-carbon metabolism; tetrahydrofolate interconversion. Functionally, catalyzes the oxidation of 5,10-methylenetetrahydrofolate to 5,10-methenyltetrahydrofolate and then the hydrolysis of 5,10-methenyltetrahydrofolate to 10-formyltetrahydrofolate. The sequence is that of Bifunctional protein FolD from Rhodospirillum rubrum (strain ATCC 11170 / ATH 1.1.1 / DSM 467 / LMG 4362 / NCIMB 8255 / S1).